A 1372-amino-acid chain; its full sequence is DNA-directed RNA polymerase subunit beta' (1372 aa).

Positions 69, 71, 84, and 87 each coordinate Zn(2+). Mg(2+) is bound by residues D460, D462, and D464. 4 residues coordinate Zn(2+): C808, C882, C889, and C892.

The protein belongs to the RNA polymerase beta' chain family. As to quaternary structure, the RNAP catalytic core consists of 2 alpha, 1 beta, 1 beta' and 1 omega subunit. When a sigma factor is associated with the core the holoenzyme is formed, which can initiate transcription. Requires Mg(2+) as cofactor. It depends on Zn(2+) as a cofactor.

The catalysed reaction is RNA(n) + a ribonucleoside 5'-triphosphate = RNA(n+1) + diphosphate. Functionally, DNA-dependent RNA polymerase catalyzes the transcription of DNA into RNA using the four ribonucleoside triphosphates as substrates. This is DNA-directed RNA polymerase subunit beta' from Rickettsia prowazekii (strain Madrid E).